The sequence spans 720 residues: Asp/Glu-specific dipeptidyl-peptidase (720 aa).

Residues M1–A21 form the signal peptide. C69 and C86 are oxidised to a cystine. Active-site charge relay system residues include H85, D227, and S655.

This sequence belongs to the peptidase S46 family. In terms of assembly, homodimer.

It localises to the cell surface. With respect to regulation, enzyme activity is completely blocked by diisopropyl-fluorophosphates, moderately by phenylmethylsulfonyl fluoride (PMSF) and 4-(2-methyl)benzenesulfonyl fluoride, and slightly by pepstatin in vitro. Catalyzes the removal of dipeptides from the N-terminus of oligopeptides. Shows a strict specificity for acidic residues (Asp or Glu) in the P1 position, and has a hydrophobic residue preference at the P2 position. Preferentially cleaves the synthetic substrate Leu-Asp-methylcoumaryl-7-amide (Leu-Asp-MCA) as compared to Leu-Glu-MCA. Is involved in amino acid metabolism and bacterial growth of asaccharolytic P.gingivalis, that utilizes amino acids from extracellular proteinaceous nutrients as energy and carbon sources. The chain is Asp/Glu-specific dipeptidyl-peptidase from Porphyromonas gingivalis (strain ATCC 33277 / DSM 20709 / CIP 103683 / JCM 12257 / NCTC 11834 / 2561).